The primary structure comprises 46 residues: MVEYKCLNCKKIIKLEELGKRARCPHCSYKILVKLRPKVVKHVKAR.

Zn(2+) contacts are provided by C9, C24, and C27.

This sequence belongs to the archaeal Rpo12/eukaryotic RPC10 RNA polymerase subunit family. In terms of assembly, part of the RNA polymerase complex. Interacts with Rpo3. Forms an Rpo3-Rpo10-Rpo11-Rpo12 complex upon coexpression. Zn(2+) is required as a cofactor.

It is found in the cytoplasm. It catalyses the reaction RNA(n) + a ribonucleoside 5'-triphosphate = RNA(n+1) + diphosphate. Functionally, DNA-dependent RNA polymerase (RNAP) catalyzes the transcription of DNA into RNA using the four ribonucleoside triphosphates as substrates. In Methanocaldococcus jannaschii (strain ATCC 43067 / DSM 2661 / JAL-1 / JCM 10045 / NBRC 100440) (Methanococcus jannaschii), this protein is DNA-directed RNA polymerase subunit Rpo12.